The primary structure comprises 471 residues: MVQAKSKGFQAGVKDYRLTYYTPDYTPKDTDLLACFRVTPQPGVPPEEAGAAVAAESSTGTWTTVWTDNLTDLDRYKGRCYDIEPVPNEDNQFFCFVAYPLDLFEEGSVTNILTSIVGNVFGFKALRGLRLEDIRFPVALIKTFQGPPHGITVERDKLNKYGRPLLGCTIKPKLGLSAKNYGRAVYECLRGGLDFTKDDENINSQPFMRWRDRFLFVQEAIVKSQAETNEVKGHYLNVTAPTCEQMMQRAEFAAEIKTPIIMHDYLTGGFTANTTLAKFCRDKGLLLHIHRAMHAVIDRQKNHGIHFRVLAKCLRLSGGDHLHSGTVVGKLEGERGITMGFVDLMREDYVEEDRARGIFFTQDYASLPGVMPVASGGIHVWHMPALVEIFGDDSCLQFGGGTLGHPWGNAPGATANRVALEACIQARNEGRSLAREGNDVIREACRWSPELAAACELWKEIKFEFEAMDTL.

Substrate contacts are provided by Asn-119 and Thr-169. Lys-171 serves as the catalytic Proton acceptor. Lys-173 serves as a coordination point for substrate. Residues Lys-197, Asp-199, and Glu-200 each contribute to the Mg(2+) site. Lys-197 carries the post-translational modification N6-carboxylysine. The Proton acceptor role is filled by His-290. Positions 291, 323, and 375 each coordinate substrate.

Belongs to the RuBisCO large chain family. Type I subfamily. In terms of assembly, heterohexadecamer of 8 large chains and 8 small chains; disulfide-linked. The disulfide link is formed within the large subunit homodimers. The cofactor is Mg(2+). The disulfide bond which can form in the large chain dimeric partners within the hexadecamer appears to be associated with oxidative stress and protein turnover.

The protein localises to the carboxysome. The catalysed reaction is 2 (2R)-3-phosphoglycerate + 2 H(+) = D-ribulose 1,5-bisphosphate + CO2 + H2O. It carries out the reaction D-ribulose 1,5-bisphosphate + O2 = 2-phosphoglycolate + (2R)-3-phosphoglycerate + 2 H(+). Its function is as follows. RuBisCO catalyzes two reactions: the carboxylation of D-ribulose 1,5-bisphosphate, the primary event in carbon dioxide fixation, as well as the oxidative fragmentation of the pentose substrate in the photorespiration process. Both reactions occur simultaneously and in competition at the same active site. The sequence is that of Ribulose bisphosphate carboxylase large chain from Microcystis aeruginosa (strain NIES-843 / IAM M-2473).